We begin with the raw amino-acid sequence, 290 residues long: 2-hydroxy-6-oxo-6-(2'-aminophenyl)hexa-2,4-dienoic acid hydrolase (290 aa).

Residues Ser114, Asp233, and His261 contribute to the active site.

It belongs to the DmpD/TodF/XylF esterase family. As to quaternary structure, homodimer.

The enzyme catalyses (2E,4E)-6-(2-aminophenyl)-2-hydroxy-6-oxohexa-2,4-dienoate + H2O = (2E)-2-hydroxypenta-2,4-dienoate + anthranilate + H(+). It participates in xenobiotic degradation; carbazole degradation. Involved in the degradation of carbazole, a toxic N-heterocyclic aromatic compound containing dibenzopyrrole system. Catalyzes the hydrolytic cleavage of a carbon-carbon bond of 2-hydroxy-6-oxo-6-(2'-aminophenyl)hexa-2,4-dienoic acid (HOPDA) to yield anthranilate. CarC is specific for 2-hydroxy-6-oxo-6-phenylhexa-2,4-dienoic acid (6-phenyl-HODA), and has little activity toward 2-hydroxy-6-oxohepta-2,4-dienoic acid and 2-hydroxymuconic semialdehyde. The effect of the presence of an amino group or hydroxyl group at the 2'-position of phenyl moiety of 6-phenyl-HODA on the enzyme activity is found to be small. The polypeptide is 2-hydroxy-6-oxo-6-(2'-aminophenyl)hexa-2,4-dienoic acid hydrolase (carC) (Metapseudomonas resinovorans (Pseudomonas resinovorans)).